The chain runs to 833 residues: Multiphosphoryl transfer protein 2 (833 aa).

An HPr domain is found at 2 to 91 (ALIVEFICEL…QWLRDEFPHC (90 aa)). Residue H16 is the Tele-phosphohistidine intermediate; for HPr activity of the active site. The residue at position 16 (H16) is a Phosphohistidine; by EI. The PTS EI stretch occupies residues 143-653 (LGNLPAAKGV…AAKARMAQLD (511 aa)). H301 functions as the Tele-phosphohistidine intermediate; for PTS EI activity in the catalytic mechanism. H301 is modified (phosphohistidine; by autocatalysis). Phosphoenolpyruvate contacts are provided by R408 and R444. Positions 543 and 567 each coordinate Mg(2+). Residues 566 to 567 (ND) and R577 contribute to the phosphoenolpyruvate site. C614 acts as the Proton donor; for EI activity in catalysis. One can recognise a PTS EIIA type-2 domain in the interval 688-830 (PLVTAECITL…DAIASLLQHE (143 aa)). H750 serves as the catalytic Tele-phosphohistidine intermediate; for PTS EIIA activity. H750 bears the Phosphohistidine; by HPr mark.

It belongs to the PEP-utilizing enzyme family. The cofactor is Mg(2+).

Its subcellular location is the cytoplasm. It catalyses the reaction L-histidyl-[protein] + phosphoenolpyruvate = N(pros)-phospho-L-histidyl-[protein] + pyruvate. The catalysed reaction is D-fructose(out) + N(pros)-phospho-L-histidyl-[protein] = D-fructose 1-phosphate(in) + L-histidyl-[protein]. Its function is as follows. Multifunctional protein that includes general (non sugar-specific) and sugar-specific components of the phosphoenolpyruvate-dependent sugar phosphotransferase system (sugar PTS). This major carbohydrate active transport system catalyzes the phosphorylation of incoming sugar substrates concomitantly with their translocation across the cell membrane. The enzyme II FrwABC PTS system is involved in fructose transport. This Escherichia coli (strain K12) protein is Multiphosphoryl transfer protein 2.